A 100-amino-acid chain; its full sequence is Cytochrome bo(3) ubiquinol oxidase subunit 4 (100 aa).

The Cytoplasmic portion of the chain corresponds to 1-9 (MLKNRYLKY). Residues 10–32 (LFILILLSILSIMPIFAIIYRIF) traverse the membrane as a helical segment. At 33–36 (SRNY) the chain is on the extracellular side. The chain crosses the membrane as a helical span at residues 37–59 (LYAFIIVCLFFQILAHIKFFLNL). Over 60–68 (DFSLEQRWK) the chain is Cytoplasmic. Residues 69–90 (LISVIFSLVVGLIILLGSIWVI) traverse the membrane as a helical segment. The Extracellular portion of the chain corresponds to 91 to 100 (KNLNNNLCIM).

The protein belongs to the cytochrome c oxidase bacterial subunit 4 family. Heterooctamer of two A chains, two B chains, two C chains and two D chains.

It localises to the cell membrane. Functionally, cytochrome bo(3) ubiquinol terminal oxidase is the component of the aerobic respiratory chain of E.coli that predominates when cells are grown at high aeration. Has proton pump activity across the membrane in addition to electron transfer, pumping 2 protons/electron. The chain is Cytochrome bo(3) ubiquinol oxidase subunit 4 (cyoD) from Buchnera aphidicola subsp. Baizongia pistaciae (strain Bp).